The chain runs to 592 residues: Arginine--tRNA ligase (592 aa).

Residues A134–H144 carry the 'HIGH' region motif.

It belongs to the class-I aminoacyl-tRNA synthetase family. In terms of assembly, monomer.

The protein resides in the cytoplasm. It catalyses the reaction tRNA(Arg) + L-arginine + ATP = L-arginyl-tRNA(Arg) + AMP + diphosphate. The sequence is that of Arginine--tRNA ligase from Coxiella burnetii (strain CbuG_Q212) (Coxiella burnetii (strain Q212)).